The chain runs to 218 residues: Small ribosomal subunit protein uS3c (218 aa).

Positions 43–118 (IKNYVQKNMK…KLNISITRIE (76 aa)) constitute a KH type-2 domain.

Belongs to the universal ribosomal protein uS3 family. Part of the 30S ribosomal subunit.

Its subcellular location is the plastid. It is found in the chloroplast. The sequence is that of Small ribosomal subunit protein uS3c (rps3) from Populus alba (White poplar).